Consider the following 300-residue polypeptide: N-acetylmuramic acid 6-phosphate etherase (300 aa).

The region spanning 57-220 (IAVAFQSGGR…TTGAMIRTGK (164 aa)) is the SIS domain. Glu85 (proton donor) is an active-site residue. Glu116 is a catalytic residue.

This sequence belongs to the GCKR-like family. MurNAc-6-P etherase subfamily. As to quaternary structure, homodimer.

The enzyme catalyses N-acetyl-D-muramate 6-phosphate + H2O = N-acetyl-D-glucosamine 6-phosphate + (R)-lactate. Its pathway is amino-sugar metabolism; 1,6-anhydro-N-acetylmuramate degradation. It participates in amino-sugar metabolism; N-acetylmuramate degradation. The protein operates within cell wall biogenesis; peptidoglycan recycling. Its function is as follows. Specifically catalyzes the cleavage of the D-lactyl ether substituent of MurNAc 6-phosphate, producing GlcNAc 6-phosphate and D-lactate. Together with AnmK, is also required for the utilization of anhydro-N-acetylmuramic acid (anhMurNAc) either imported from the medium or derived from its own cell wall murein, and thus plays a role in cell wall recycling. This Aliivibrio fischeri (strain MJ11) (Vibrio fischeri) protein is N-acetylmuramic acid 6-phosphate etherase.